A 142-amino-acid polypeptide reads, in one-letter code: Hemoglobin subunit alpha (142 aa).

The 141-residue stretch at 2–142 folds into the Globin domain; that stretch reads VLSPADKTNV…VSTVLTSKYR (141 aa). Serine 4 carries the phosphoserine modification. Lysine 8 carries the N6-succinyllysine modification. Threonine 9 is modified (phosphothreonine). Lysine 12 is subject to N6-succinyllysine. At lysine 17 the chain carries N6-acetyllysine; alternate. An N6-succinyllysine; alternate modification is found at lysine 17. Tyrosine 25 carries the phosphotyrosine modification. Phosphoserine is present on serine 36. Residue lysine 41 is modified to N6-succinyllysine. The residue at position 50 (serine 50) is a Phosphoserine. Histidine 59 provides a ligand contact to O2. Histidine 88 provides a ligand contact to heme b. The residue at position 103 (serine 103) is a Phosphoserine. The residue at position 109 (threonine 109) is a Phosphothreonine. A phosphoserine mark is found at serine 125 and serine 132. Phosphothreonine occurs at positions 135 and 138. Phosphoserine is present on serine 139.

It belongs to the globin family. Heterotetramer of two alpha chains and two beta chains. In terms of tissue distribution, red blood cells.

Functionally, involved in oxygen transport from the lung to the various peripheral tissues. Hemopressin acts as an antagonist peptide of the cannabinoid receptor CNR1. Hemopressin-binding efficiently blocks cannabinoid receptor CNR1 and subsequent signaling. In Sapajus apella (Brown-capped capuchin), this protein is Hemoglobin subunit alpha (HBA).